The chain runs to 812 residues: Valine--tRNA ligase (812 aa).

The 'HIGH' region signature appears at 46–56 (PTVSGQLHIGH). Positions 536-540 (KMSKS) match the 'KMSKS' region motif. K539 is an ATP binding site.

It belongs to the class-I aminoacyl-tRNA synthetase family. ValS type 2 subfamily. As to quaternary structure, monomer.

The protein localises to the cytoplasm. The enzyme catalyses tRNA(Val) + L-valine + ATP = L-valyl-tRNA(Val) + AMP + diphosphate. In terms of biological role, catalyzes the attachment of valine to tRNA(Val). As ValRS can inadvertently accommodate and process structurally similar amino acids such as threonine, to avoid such errors, it has a 'posttransfer' editing activity that hydrolyzes mischarged Thr-tRNA(Val) in a tRNA-dependent manner. This chain is Valine--tRNA ligase, found in Rickettsia bellii (strain RML369-C).